A 406-amino-acid chain; its full sequence is FBD-associated F-box protein At1g60410 (406 aa).

An F-box domain is found at 9–59 (KDRLSDLPCHLLCRILSNLSTKESVRTSVLSPRWSNLWSLVSVLDLDFQDF). The region spanning 355 to 405 (MEEIKLSPVPQCVLSSLDFLQLKAPSTPSKMKLATYFRKKCTRLTKMLLSG) is the FBD domain.

This Arabidopsis thaliana (Mouse-ear cress) protein is FBD-associated F-box protein At1g60410.